Reading from the N-terminus, the 207-residue chain is Inhibitor of hydrogen peroxide resistance (207 aa).

A DNA-binding region (H-T-H motif) is located at residues 163–182 (MNYIHQRTRVSRSVVAEVLA).

This sequence belongs to the IprA family.

Functionally, involved in oxidative stress resistance. The chain is Inhibitor of hydrogen peroxide resistance from Salmonella typhimurium (strain LT2 / SGSC1412 / ATCC 700720).